The chain runs to 342 residues: 4-hydroxy-3-methylbut-2-enyl diphosphate reductase (342 aa).

Residue cysteine 47 participates in [4Fe-4S] cluster binding. (2E)-4-hydroxy-3-methylbut-2-enyl diphosphate contacts are provided by histidine 78 and histidine 111. The dimethylallyl diphosphate site is built by histidine 78 and histidine 111. The isopentenyl diphosphate site is built by histidine 78 and histidine 111. Cysteine 133 contributes to the [4Fe-4S] cluster binding site. Histidine 161 serves as a coordination point for (2E)-4-hydroxy-3-methylbut-2-enyl diphosphate. Histidine 161 is a dimethylallyl diphosphate binding site. Histidine 161 is a binding site for isopentenyl diphosphate. Glutamate 163 functions as the Proton donor in the catalytic mechanism. Threonine 201 is a binding site for (2E)-4-hydroxy-3-methylbut-2-enyl diphosphate. [4Fe-4S] cluster is bound at residue cysteine 231. Positions 259, 260, 261, and 303 each coordinate (2E)-4-hydroxy-3-methylbut-2-enyl diphosphate. Serine 259, serine 260, asparagine 261, and serine 303 together coordinate dimethylallyl diphosphate. Serine 259, serine 260, asparagine 261, and serine 303 together coordinate isopentenyl diphosphate.

It belongs to the IspH family. [4Fe-4S] cluster serves as cofactor.

It carries out the reaction isopentenyl diphosphate + 2 oxidized [2Fe-2S]-[ferredoxin] + H2O = (2E)-4-hydroxy-3-methylbut-2-enyl diphosphate + 2 reduced [2Fe-2S]-[ferredoxin] + 2 H(+). It catalyses the reaction dimethylallyl diphosphate + 2 oxidized [2Fe-2S]-[ferredoxin] + H2O = (2E)-4-hydroxy-3-methylbut-2-enyl diphosphate + 2 reduced [2Fe-2S]-[ferredoxin] + 2 H(+). It functions in the pathway isoprenoid biosynthesis; dimethylallyl diphosphate biosynthesis; dimethylallyl diphosphate from (2E)-4-hydroxy-3-methylbutenyl diphosphate: step 1/1. The protein operates within isoprenoid biosynthesis; isopentenyl diphosphate biosynthesis via DXP pathway; isopentenyl diphosphate from 1-deoxy-D-xylulose 5-phosphate: step 6/6. Functionally, catalyzes the conversion of 1-hydroxy-2-methyl-2-(E)-butenyl 4-diphosphate (HMBPP) into a mixture of isopentenyl diphosphate (IPP) and dimethylallyl diphosphate (DMAPP). Acts in the terminal step of the DOXP/MEP pathway for isoprenoid precursor biosynthesis. The sequence is that of 4-hydroxy-3-methylbut-2-enyl diphosphate reductase from Anaplasma marginale (strain St. Maries).